The primary structure comprises 479 residues: MDDDDIEPLEYETKDETEAALAPQSSEDTLYCEAEAAPSVEKEKPTREDSETDLEIEDTEKFFSIGQKELYLEACKLVGVVPVSYFIRNMEESCMNLNHHGLGPMGIKAIAITLVSNTTVLKLELEDNSIQEEGILSLMEMLHENYYLQELNVSDNNLGLEGARIISDFLQENNSSLWKLKLSGNKFKEECALLLCQALSSNYRIRSLNLSHNEFSDTAGEYLGQMLALNVGLQSLNLSWNHFNVRGAVALCNGLRTNVTLKKLDVSMNGFGNDGALALGDTLKLNSCLVYVDVSRNGITNEGASRISKGLENNECLQVLKLFLNPVSLEGAYSLILAIKRNPKSRMEDLDISNVLVSEQFVKVLDGVCAIHPQLDVVYKGLQGLSTKKTVSLETNPIKLIQNYTDQNKISVVEFFKSLNPSGLMTMPVGDFRKAIIQQTNIPINRYQARELIKKLEEKNGMVNFSGFKSLKVTAAGQL.

The segment covering 1-10 has biased composition (acidic residues); it reads MDDDDIEPLE. The segment at 1-29 is disordered; it reads MDDDDIEPLEYETKDETEAALAPQSSEDT. LRR repeat units lie at residues 119-140, 147-167, 176-197, 204-225, 232-253, 260-281, 288-309, and 316-336; these read TVLK…SLME, YLQE…RIIS, SLWK…LLCQ, RIRS…YLGQ, GLQS…ALCN, TLKK…ALGD, CLVY…RISK, and CLQV…YSLI.

The protein is Leucine-rich repeat-containing protein 74A of Rattus norvegicus (Rat).